The chain runs to 703 residues: Serotransferrin (703 aa).

An N-terminal signal peptide occupies residues 1 to 19; it reads MDLSLHVALCLGMLALCLA. 2 consecutive Transferrin-like domains span residues 27 to 341 and 354 to 686; these read VRWC…ALKE and VRWC…SLNK. 2 cysteine pairs are disulfide-bonded: Cys30-Cys65 and Cys40-Cys56. Fe(3+) contacts are provided by Asp80 and Tyr112. 3 disulfides stabilise this stretch: Cys135-Cys218, Cys180-Cys193, and Cys246-Cys260. Thr137, Lys141, Ala143, and Gly144 together coordinate hydrogencarbonate. Position 212 (Tyr212) interacts with Fe(3+). Fe(3+) is bound at residue His268. The interval 341 to 350 is connecting region; the sequence is EGVKEDDLAA. 2 disulfide bridges follow: Cys357-Cys389 and Cys367-Cys380. Asp404 and Tyr443 together coordinate Fe(3+). Intrachain disulfides connect Cys414–Cys698, Cys432–Cys659, Cys466–Cys545, Cys490–Cys687, Cys500–Cys514, Cys511–Cys528, and Cys585–Cys599. 4 residues coordinate hydrogencarbonate: Thr468, Arg472, Ala474, and Gly475. Tyr539 is a Fe(3+) binding site. Residue His607 participates in Fe(3+) binding.

The protein belongs to the transferrin family. In terms of assembly, monomer. Plasma.

It localises to the secreted. Its function is as follows. Transferrins are iron binding transport proteins which can bind two Fe(3+) ions in association with the binding of an anion, usually bicarbonate. It is responsible for the transport of iron from sites of absorption and heme degradation to those of storage and utilization. Serum transferrin may also have a further role in stimulating cell proliferation. In Xenopus tropicalis (Western clawed frog), this protein is Serotransferrin (tf).